The sequence spans 154 residues: CS6 fimbrial subunit A (154 aa).

The N-terminal stretch at 1–18 (MKKTIGLILILASFGSHA) is a signal peptide.

It localises to the fimbrium. Its function is as follows. Fimbriae (also called pili), polar filaments radiating from the surface of the bacterium to a length of 0.5-1.5 micrometers and numbering 100-300 per cell, enable bacteria to colonize the epithelium of specific host organs. This is CS6 fimbrial subunit A (cssA) from Escherichia coli.